The primary structure comprises 961 residues: Ubiquitin carboxyl-terminal hydrolase 4 (961 aa).

One can recognise a DUSP domain in the interval 11–122 (PDVETQKTEL…GQQPIVRKVV (112 aa)). The segment at 27–216 (TLQRGAQWYL…LYQGQVLVIE (190 aa)) is necessary for interaction with SART3. Positions 133-141 (VEVYLLELK) match the Nuclear export signal motif. Positions 142-226 (LCENSDPTNV…PQNEDGTWPR (85 aa)) constitute a Ubiquitin-like 1 domain. The segment at 219–257 (NEDGTWPRQTLQSKSSTAPSRNFTTSSKPSASPYSSMSA) is disordered. Over residues 225-243 (PRQTLQSKSSTAPSRNFTT) the composition is skewed to polar residues. The tract at residues 229–295 (LQSKSSTAPS…SYNCQEPPSP (67 aa)) is required for USP4 activation by providing conformational flexibility between the DUSP and catalytic domains. A compositionally biased stretch (low complexity) spans 244–257 (SSKPSASPYSSMSA). Residues 302-921 (CGLGNLGNTC…AAYVLFYQRR (620 aa)) form the USP domain. C311 is a catalytic residue. A regulates ubiquitin dissociation region spans residues 384-386 (PQF). The necessary for interaction with RBL2 stretch occupies residues 405–407 (LHE). S445 bears the Phosphoserine mark. Residues 459-463 (LVCPE) form a necessary for interaction with RB1 and RBL2 region. Positions 461 and 464 each coordinate Zn(2+). Residues 483–571 (LKKDRIMEVF…IFVYEICTTP (89 aa)) enclose the Ubiquitin-like 2 domain. Residues 485 to 773 (KDRIMEVFLV…SQPQKKKKAA (289 aa)) form an interacts with DUSP and ubiquitin-like 1 domains and is required for USP4 activation region. Positions 641-700 (SSPLEPGACNGSRGSYEGDEEEMDHQEEGKEQLSEVEESGEDSQGGDPTETTQKAKGPPR) are disordered. S655, S674, and S679 each carry phosphoserine. The Nuclear localization signal motif lies at 765–770 (QPQKKK). The Zn(2+) site is built by C797 and C800. H879 is an active-site residue. Residues 924–961 (ECPSTSSPVSFPGSDGGAKLSSSQQDLGEEEAYTMDTN) are disordered. Over residues 950-961 (LGEEEAYTMDTN) the composition is skewed to acidic residues.

This sequence belongs to the peptidase C19 family. USP4 subfamily. As to quaternary structure, interacts with RB1 (both dephosphorylated and hypophosphorylated forms). Interacts with RBL1 and RBL2. Interacts with ADORA2A (via cytoplasmic C-terminus); the interaction is direct. Interacts with SART3; recruits USP4 to its substrate PRPF3. Post-translationally, phosphorylated at Ser-445 by PKB/AKT1 in response to EGF stimulus, promoting its ability deubiquitinate RHEB. Monoubiquitinated by TRIM21. Ubiquitination does not lead to its proteasomal degradation. Autodeubiquitinated. Expressed in hippocampus and striatum (at protein level).

It localises to the cytoplasm. The protein localises to the nucleus. It catalyses the reaction Thiol-dependent hydrolysis of ester, thioester, amide, peptide and isopeptide bonds formed by the C-terminal Gly of ubiquitin (a 76-residue protein attached to proteins as an intracellular targeting signal).. The completion of the deubiquitinase reaction is mediated by the DUSP and ubiquitin-like 1 domains which promotes the release of ubiquitin from the catalytic site enabling subsequent reactions to occur. In terms of biological role, deubiquitinating enzyme that removes conjugated ubiquitin from target proteins. Deubiquitinates PDPK1. Deubiquitinates TRIM21. Deubiquitinates receptor ADORA2A which increases the amount of functional receptor at the cell surface. Deubiquitinates HAS2. Deubiquitinates RHEB in response to EGF signaling, promoting mTORC1 signaling. May regulate mRNA splicing through deubiquitination of the U4 spliceosomal protein PRPF3. This may prevent its recognition by the U5 component PRPF8 thereby destabilizing interactions within the U4/U6.U5 snRNP. May also play a role in the regulation of quality control in the ER. The polypeptide is Ubiquitin carboxyl-terminal hydrolase 4 (Usp4) (Rattus norvegicus (Rat)).